A 206-amino-acid polypeptide reads, in one-letter code: Eukaryotic translation initiation factor isoform 4E-2 (206 aa).

A disulfide bond links Cys-103 and Cys-142.

The protein belongs to the eukaryotic initiation factor 4E family. EIF4F is a multi-subunit complex, the composition of which varies with external and internal environmental conditions. It is composed of at least EIF4A, EIF4E and EIF4G. EIF4E is also known to interact with other partners. In higher plants two isoforms of EIF4F have been identified, named isoform EIF4F and isoform EIF(iso)4F. Isoform EIF4F has subunits p220 and p26, whereas isoform EIF(iso)4F has subunits p82 and p28. In terms of processing, according to the redox status, the Cys-103-Cys-142 disulfide bridge may have a role in regulating protein function by affecting its ability to bind capped mRNA.

Functionally, recognizes and binds the 7-methylguanosine-containing mRNA cap during an early step in the initiation of protein synthesis and facilitates ribosome binding by inducing the unwinding of the mRNAs secondary structures. The sequence is that of Eukaryotic translation initiation factor isoform 4E-2 from Oryza sativa subsp. japonica (Rice).